The following is a 96-amino-acid chain: Co-chaperonin GroES (96 aa).

This sequence belongs to the GroES chaperonin family. Heptamer of 7 subunits arranged in a ring. Interacts with the chaperonin GroEL.

It is found in the cytoplasm. Its function is as follows. Together with the chaperonin GroEL, plays an essential role in assisting protein folding. The GroEL-GroES system forms a nano-cage that allows encapsulation of the non-native substrate proteins and provides a physical environment optimized to promote and accelerate protein folding. GroES binds to the apical surface of the GroEL ring, thereby capping the opening of the GroEL channel. The polypeptide is Co-chaperonin GroES (Haemophilus influenzae (strain PittEE)).